A 171-amino-acid chain; its full sequence is S-ribosylhomocysteine lyase (171 aa).

H54, H58, and C128 together coordinate Fe cation.

Belongs to the LuxS family. Homodimer. The cofactor is Fe cation.

It catalyses the reaction S-(5-deoxy-D-ribos-5-yl)-L-homocysteine = (S)-4,5-dihydroxypentane-2,3-dione + L-homocysteine. Functionally, involved in the synthesis of autoinducer 2 (AI-2) which is secreted by bacteria and is used to communicate both the cell density and the metabolic potential of the environment. The regulation of gene expression in response to changes in cell density is called quorum sensing. Catalyzes the transformation of S-ribosylhomocysteine (RHC) to homocysteine (HC) and 4,5-dihydroxy-2,3-pentadione (DPD). The sequence is that of S-ribosylhomocysteine lyase from Campylobacter curvus (strain 525.92).